The primary structure comprises 214 residues: Uracil phosphoribosyltransferase (214 aa).

5-phospho-alpha-D-ribose 1-diphosphate contacts are provided by residues R81, R106, and 133–141; that span reads DPMLATGNS. Uracil-binding positions include I196 and 201–203; that span reads GDA. Residue D202 participates in 5-phospho-alpha-D-ribose 1-diphosphate binding.

The protein belongs to the UPRTase family. The cofactor is Mg(2+).

The catalysed reaction is UMP + diphosphate = 5-phospho-alpha-D-ribose 1-diphosphate + uracil. The protein operates within pyrimidine metabolism; UMP biosynthesis via salvage pathway; UMP from uracil: step 1/1. Its activity is regulated as follows. Allosterically activated by GTP. Catalyzes the conversion of uracil and 5-phospho-alpha-D-ribose 1-diphosphate (PRPP) to UMP and diphosphate. The sequence is that of Uracil phosphoribosyltransferase from Legionella pneumophila subsp. pneumophila (strain Philadelphia 1 / ATCC 33152 / DSM 7513).